Consider the following 513-residue polypeptide: Glutamate--tRNA ligase 2 (513 aa).

Residues 11–21 carry the 'HIGH' region motif; the sequence is PSPTGFLHIGS. Residues 240 to 244 carry the 'KMSKS' region motif; sequence KLSKR. Residue K243 participates in ATP binding.

It belongs to the class-I aminoacyl-tRNA synthetase family. Glutamate--tRNA ligase type 1 subfamily. In terms of assembly, monomer.

It is found in the cytoplasm. The catalysed reaction is tRNA(Glu) + L-glutamate + ATP = L-glutamyl-tRNA(Glu) + AMP + diphosphate. Catalyzes the attachment of glutamate to tRNA(Glu) in a two-step reaction: glutamate is first activated by ATP to form Glu-AMP and then transferred to the acceptor end of tRNA(Glu). This chain is Glutamate--tRNA ligase 2, found in Rickettsia rickettsii (strain Iowa).